The primary structure comprises 265 residues: uncharacterized protein (265 aa).

The disordered stretch occupies residues 1 to 160 (MDKSKNLFDL…STEPVVAAPV (160 aa)). A compositionally biased stretch (low complexity) spans 28 to 42 (AAAAPVAAKKPVAPK). Basic and acidic residues-rich tracts occupy residues 73-85 (SEER…DSKS) and 102-119 (RQFD…ENKK).

Belongs to the SERBP1-HABP4 family.

Ribosome-binding protein that acts as a regulator of mRNA translation by promoting ribosome inactivation. This is an uncharacterized protein from Dictyostelium discoideum (Social amoeba).